Consider the following 197-residue polypeptide: MNILIIFVSYLLGSLPTGFLIGKYLKNIDLRNIGSGSTGATNVLRNVGKWPALIVFIIDVGKGLIAVKIAQHYTDQGLIEVIAGISAITGHIWPIWLRGKGGKAVATGLGMFLALSWKVGLASLGIFLIVLAKTKFVSLSSISAAIFLPFFMFFYLGNYMHSYFFISLIVALLVIWKHRTNITRLLKGEESKINQNQ.

6 helical membrane-spanning segments follow: residues 1-21 (MNILIIFVSYLLGSLPTGFLI), 50-70 (WPALIVFIIDVGKGLIAVKIA), 77-97 (GLIEVIAGISAITGHIWPIWL), 111-131 (MFLALSWKVGLASLGIFLIVL), 136-156 (FVSLSSISAAIFLPFFMFFYL), and 157-177 (GNYMHSYFFISLIVALLVIWK).

It belongs to the PlsY family. As to quaternary structure, probably interacts with PlsX.

Its subcellular location is the cell inner membrane. It catalyses the reaction an acyl phosphate + sn-glycerol 3-phosphate = a 1-acyl-sn-glycero-3-phosphate + phosphate. Its pathway is lipid metabolism; phospholipid metabolism. Its function is as follows. Catalyzes the transfer of an acyl group from acyl-phosphate (acyl-PO(4)) to glycerol-3-phosphate (G3P) to form lysophosphatidic acid (LPA). This enzyme utilizes acyl-phosphate as fatty acyl donor, but not acyl-CoA or acyl-ACP. This chain is Glycerol-3-phosphate acyltransferase, found in Prochlorococcus marinus (strain MIT 9312).